The primary structure comprises 325 residues: Secreted frizzled-related protein 3 (325 aa).

The first 32 residues, 1–32, serve as a signal peptide directing secretion; it reads MVCGSPGGMLLLRAGLLALAALCLLRVPGARA. In terms of domain architecture, FZ spans 33–150; that stretch reads AACEPVRIPL…VYDRGVCISP (118 aa). 5 disulfide bridges follow: Cys35–Cys96, Cys43–Cys89, Cys80–Cys119, Cys108–Cys147, and Cys112–Cys136. N-linked (GlcNAc...) asparagine glycosylation is present at Asn49. The 121-residue stretch at 178 to 298 folds into the NTR domain; sequence CKCKPIRATQ…WDMKLRHLGL (121 aa). The disordered stretch occupies residues 297-325; sequence GLSKSDSSNSDSTQSQKSGRNSNPRQARN. Low complexity predominate over residues 299 to 314; the sequence is SKSDSSNSDSTQSQKS. A compositionally biased stretch (polar residues) spans 315 to 325; sequence GRNSNPRQARN.

The protein belongs to the secreted frizzled-related protein (sFRP) family. As to quaternary structure, interacts with MYOC. Expressed primarily in the cartilaginous cores of the long bone during embryonic and fetal development and in the appendicular skeleton (6-13 weeks). At 13 weeks of gestation, transcripts were present in early chondroblasts of the tarsal bones of the foot, the carpal bones of the hands and the epiphysis of long bones. Highly expressed in placenta and heart, followed by brain, skeletal muscle, kidney and pancreas. Weakly expressed in lung and liver.

It is found in the secreted. Functionally, soluble frizzled-related proteins (sFRPS) function as modulators of Wnt signaling through direct interaction with Wnts. They have a role in regulating cell growth and differentiation in specific cell types. SFRP3/FRZB appears to be involved in limb skeletogenesis. Antagonist of Wnt8 signaling. Regulates chondrocyte maturation and long bone development. The sequence is that of Secreted frizzled-related protein 3 (FRZB) from Homo sapiens (Human).